The chain runs to 77 residues: Adipokinetic prohormone type 3 (77 aa).

Positions 1-22 (MQVRAVLVLAVVALVAVATSRA) are cleaved as a signal peptide. Gln23 bears the Pyrrolidone carboxylic acid mark. A Tryptophan amide modification is found at Trp30.

The protein belongs to the AKH/HRTH/RPCH family.

The protein localises to the secreted. Its function is as follows. This hormone, released from cells in the corpora cardiaca, causes release of diglycerides from the fat body and stimulation of muscles to use these diglycerides as an energy source during energy-demanding processes. The sequence is that of Adipokinetic prohormone type 3 from Locusta migratoria (Migratory locust).